Here is a 158-residue protein sequence, read N- to C-terminus: NADH-quinone oxidoreductase subunit B 1 (158 aa).

The [4Fe-4S] cluster site is built by cysteine 37, cysteine 38, cysteine 102, and cysteine 132.

This sequence belongs to the complex I 20 kDa subunit family. As to quaternary structure, NDH-1 is composed of 14 different subunits. Subunits NuoB, C, D, E, F, and G constitute the peripheral sector of the complex. [4Fe-4S] cluster is required as a cofactor.

The protein resides in the cell inner membrane. The enzyme catalyses a quinone + NADH + 5 H(+)(in) = a quinol + NAD(+) + 4 H(+)(out). NDH-1 shuttles electrons from NADH, via FMN and iron-sulfur (Fe-S) centers, to quinones in the respiratory chain. Couples the redox reaction to proton translocation (for every two electrons transferred, four hydrogen ions are translocated across the cytoplasmic membrane), and thus conserves the redox energy in a proton gradient. This is NADH-quinone oxidoreductase subunit B 1 from Chromobacterium violaceum (strain ATCC 12472 / DSM 30191 / JCM 1249 / CCUG 213 / NBRC 12614 / NCIMB 9131 / NCTC 9757 / MK).